The primary structure comprises 490 residues: ATP synthase subunit beta, plastid (490 aa).

170–177 contacts ATP; the sequence is GGAGVGKT.

It belongs to the ATPase alpha/beta chains family. In terms of assembly, F-type ATPases have 2 components, CF(1) - the catalytic core - and CF(0) - the membrane proton channel. CF(1) has five subunits: alpha(3), beta(3), gamma(1), delta(1), epsilon(1). CF(0) has four main subunits: a(1), b(1), b'(1) and c(9-12).

It is found in the plastid membrane. It catalyses the reaction ATP + H2O + 4 H(+)(in) = ADP + phosphate + 5 H(+)(out). In terms of biological role, produces ATP from ADP in the presence of a proton gradient across the membrane. The catalytic sites are hosted primarily by the beta subunits. The polypeptide is ATP synthase subunit beta, plastid (atpB) (Cuscuta japonica (Japanese dodder)).